We begin with the raw amino-acid sequence, 226 residues long: Lysoplasmalogenase TMEM86B (226 aa).

Residues 1–23 (MDPGKEGLPRKPRFSAQQLHVGK) lie on the Cytoplasmic side of the membrane. A helical transmembrane segment spans residues 24–40 (WLSPFFFTCAVYFLLWI). Residues 41–46 (PDDQPS) are Extracellular-facing. Residues 47–64 (WVGALVKCLPVLSLVVFL) form a helical membrane-spanning segment. The Cytoplasmic portion of the chain corresponds to 65–76 (RAVDAGGGYSAR). Residues 77-93 (LQGALLCSAVGDACLVW) traverse the membrane as a helical segment. The Extracellular portion of the chain corresponds to 94-99 (PEAFLH). A helical transmembrane segment spans residues 100–117 (GVAAFAAAHLLYLWAFGL). Residues 118–123 (TPLQPG) lie on the Cytoplasmic side of the membrane. A helical membrane pass occupies residues 124-140 (LLLLVILAALPYYGLLL). The Extracellular portion of the chain corresponds to 141 to 146 (WHLPPD). A helical membrane pass occupies residues 147-163 (LVLALTAYSLALATMLW). Residues 164–171 (RGLARGGS) are Cytoplasmic-facing. The helical transmembrane segment at 172–188 (TGWGALLFTLSDTTLAW) threads the bilayer. Residues 189-199 (NAFAQPLPHAR) lie on the Extracellular side of the membrane. The chain crosses the membrane as a helical span at residues 200–217 (LVVMTTYYSAQVLISLSV). The Cytoplasmic segment spans residues 218–226 (SQSPKLKPN).

This sequence belongs to the TMEM86 family. In terms of assembly, homodimer.

It is found in the endoplasmic reticulum membrane. It localises to the cytoplasm. The enzyme catalyses a 1-O-(1Z-alkenyl)-sn-glycero-3-phosphocholine + H2O = a 2,3-saturated aldehyde + sn-glycerol 3-phosphocholine. It carries out the reaction a 1-O-(1Z-alkenyl)-sn-glycero-3-phosphoethanolamine + H2O = a 2,3-saturated aldehyde + sn-glycero-3-phosphoethanolamine. Its activity is regulated as follows. Competitively inhibited by lysophosphatidic acid. Catalyzes the hydrolysis of the vinyl ether bond of choline or ethanolamine lysoplasmalogens, forming fatty aldehyde and glycerophosphocholine or glycerophosphoethanolamine, respectively and is specific for the sn-2-deacylated (lyso) form of plasmalogen. The chain is Lysoplasmalogenase TMEM86B (TMEM86B) from Sus scrofa (Pig).